The sequence spans 1440 residues: Glucose transporter type 1 (1440 aa).

An N-terminal signal peptide occupies residues 1–23; that stretch reads MAFLCAPGLTFFLTYSIFSAVLG. The Cytoplasmic portion of the chain corresponds to 24–67; that stretch reads MLQFGYNTGVINAPEKNIENFMKDVYKDRYGEDISEEFIQQLYS. A helical transmembrane segment spans residues 68–88; sequence VAVSIFAIGGMLGGFSGGWMA. The Extracellular segment spans residues 89 to 95; that stretch reads NRFGRKG. A helical membrane pass occupies residues 96-116; the sequence is GLLLNNVLGIAGACLMGFTKV. Residues 117–127 are Cytoplasmic-facing; the sequence is SHSYEMLFLGR. The helical transmembrane segment at 128–148 threads the bilayer; that stretch reads FIIGVNCGLNTSLVPMYISEI. At 149 to 162 the chain is on the extracellular side; that stretch reads APLNLRGGLGTVNQ. Gln162 provides a ligand contact to D-glucose. A helical transmembrane segment spans residues 163 to 183; it reads LAVTVGLLLSQVLGIEQILGT. Residues 184 to 186 are Cytoplasmic-facing; sequence NEG. A helical membrane pass occupies residues 187-207; the sequence is WPILLGLAICPAILQLILLPV. Over 208–272 the chain is Extracellular; the sequence is CPESPRYLLI…LICSPTLRPP (65 aa). A helical transmembrane segment spans residues 273–293; it reads LIIGIVMQLSQQFSGINAVFY. D-glucose is bound by residues 283–284 and Asn289; that span reads QQ. The Cytoplasmic portion of the chain corresponds to 294–310; the sequence is YSTSLFMSSGLTEESAK. Residues 311-331 form a helical membrane-spanning segment; the sequence is FATIGIGAIMVVMTLVSIPLM. Residues 332–339 are Extracellular-facing; the sequence is DRTGRRTL. Residues 340 to 360 traverse the membrane as a helical segment; that stretch reads HLYGLGGMFIFSIFITISFLI. Over 361 to 372 the chain is Cytoplasmic; sequence KEMIDWMSYLSV. A helical membrane pass occupies residues 373 to 393; the sequence is VATLGFVVFFAVGPGSIPWMI. Trp391 is a binding site for D-glucose. Residues 394–405 lie on the Extracellular side of the membrane; that stretch reads TAELFSQGPRPS. A helical membrane pass occupies residues 406 to 426; sequence AMAIAVLVNWMANFVVGIGFP. At 427–429 the chain is on the cytoplasmic side; it reads SMK. The helical transmembrane segment at 430–450 threads the bilayer; that stretch reads TALENYTFLPFSVFLAIFWIF. Residues 451–534 lie on the Extracellular side of the membrane; the sequence is TYKKVPETKN…GPYPLSDSTN (84 aa). Asn460 and Asn480 each carry an N-linked (GlcNAc...) asparagine glycan. The chain crosses the membrane as a helical span at residues 535–555; the sequence is LLGPGSSSYGPGGVLGLAGSG. The Cytoplasmic segment spans residues 556-1440; that stretch reads SGLGGQCYTN…RKYTDFLRKK (885 aa). Disordered regions lie at residues 628 to 708, 725 to 808, 966 to 987, 1000 to 1083, 1304 to 1330, and 1380 to 1401; these read ERFL…SRYA, QANP…HSVM, APEGSTLERQSSKGALGSSELP, FLAD…GSYH, LEGAGGGGASTTSEHSSSLPSPQPLTH, and ANSPHSQSHHSHAHTHTHGHHV. Positions 669–678 are enriched in polar residues; it reads PPDSASVRST. Low complexity predominate over residues 686 to 704; that stretch reads QPQQVHHQQQQVHHQQQHQ. Residues 730–739 are compositionally biased toward pro residues; the sequence is QAPPQQPAPP. Over residues 754 to 789 the composition is skewed to basic residues; sequence CQQRKHSHSPHHSRHTSPHSHHHHSHHSRHSRRSRR. Low complexity predominate over residues 1313–1330; that stretch reads STTSEHSSSLPSPQPLTH.

This sequence belongs to the major facilitator superfamily. Sugar transporter (TC 2.A.1.1) family. Glucose transporter subfamily.

Its subcellular location is the membrane. In terms of biological role, facilitative glucose transporter. The polypeptide is Glucose transporter type 1 (Glut1) (Drosophila melanogaster (Fruit fly)).